The primary structure comprises 130 residues: MPKPSKKINLRKIKKKVPKGVIHIQASFNNTIVTITDVRGQVISWSSAGACGFKGAKKSTPFAAQTAAEKALRPLIDQGMRQAEVMISGPGRGRDTALRIIRKSGITLNFVRDVTPIPHNGCRPPSKRRV.

Belongs to the universal ribosomal protein uS11 family. As to quaternary structure, part of the 30S ribosomal subunit.

The protein resides in the plastid. The protein localises to the chloroplast. In Chaetosphaeridium globosum (Charophycean green alga), this protein is Small ribosomal subunit protein uS11c.